The following is a 135-amino-acid chain: Transcription antitermination protein NusB (135 aa).

It belongs to the NusB family.

Functionally, involved in transcription antitermination. Required for transcription of ribosomal RNA (rRNA) genes. Binds specifically to the boxA antiterminator sequence of the ribosomal RNA (rrn) operons. The polypeptide is Transcription antitermination protein NusB (Clostridium perfringens (strain ATCC 13124 / DSM 756 / JCM 1290 / NCIMB 6125 / NCTC 8237 / Type A)).